Reading from the N-terminus, the 298-residue chain is uncharacterized protein (298 aa).

This sequence belongs to the NAD(P)-dependent epimerase/dehydratase family.

This is an uncharacterized protein from Saccharomyces cerevisiae (strain ATCC 204508 / S288c) (Baker's yeast).